Consider the following 141-residue polypeptide: Extracellular globin-1 (141 aa).

The 141-residue stretch at 1–141 (DCNTLKRFKV…YAVIAAGIKP (141 aa)) folds into the Globin domain. An intrachain disulfide couples C2 to C131. Position 94 (H94) interacts with heme b.

Belongs to the globin family. In terms of assembly, the giant hemoglobins of worms are formed of a monomeric subunit and a disulfide-bonded trimer. This subunit is monomeric.

Its subcellular location is the secreted. The polypeptide is Extracellular globin-1 (Metaphire sieboldi (Earthworm)).